The chain runs to 138 residues: uncharacterized protein (138 aa).

Residues 74-96 (RRRSPSLPARRPPTPREDALEDY) form a disordered region. Residues 87–96 (TPREDALEDY) show a composition bias toward basic and acidic residues.

This is an uncharacterized protein from Orgyia pseudotsugata (Douglas-fir tussock moth).